Consider the following 201-residue polypeptide: UPF0301 protein RHA1_ro03630 (201 aa).

The protein belongs to the UPF0301 (AlgH) family.

This chain is UPF0301 protein RHA1_ro03630, found in Rhodococcus jostii (strain RHA1).